Reading from the N-terminus, the 146-residue chain is Bifunctional adenosine 5'-phosphosulfate phosphorylase/adenylylsulfatase HINT4 (146 aa).

The region spanning 9-120 (IFCEIVRNPT…YVPRWKAIKY (112 aa)) is the HIT domain. Residues 101–105 (HLHLH) carry the Histidine triad motif motif. Catalysis depends on histidine 105, which acts as the Tele-AMP-histidine intermediate.

As to quaternary structure, homodimer.

The protein localises to the peroxisome. The enzyme catalyses sulfate + ADP + H(+) = adenosine 5'-phosphosulfate + phosphate. The catalysed reaction is adenosine 5'-phosphosulfate + H2O = sulfate + AMP + 2 H(+). Its activity is regulated as follows. The adenosine 5'-phosphosulfate phosphorylase activity is enhanced at low pH. In terms of biological role, possesses adenylylsulfatase activity in vitro, releasing AMP and sulfate from adenylyl sulfate. Also possesses adenosine 5'-phosphosulfate (APS) phosphorylase activity in vitro. Catalyzes the phosphorolysis of APS, leading to ADP and sulfate. The chain is Bifunctional adenosine 5'-phosphosulfate phosphorylase/adenylylsulfatase HINT4 from Arabidopsis thaliana (Mouse-ear cress).